A 114-amino-acid polypeptide reads, in one-letter code: Cytochrome c2 (114 aa).

Q1 bears the Pyrrolidone carboxylic acid mark. 4 residues coordinate heme c: C13, C16, H17, and M93.

It belongs to the cytochrome c family. Binds 1 heme c group covalently per subunit.

Functionally, cytochrome c2 is found mainly in purple, non-sulfur, photosynthetic bacteria where it functions as the electron donor to the oxidized bacteriochlorophyll in the photophosphorylation pathway. However, it may also have a role in the respiratory chain and is found in some non-photosynthetic bacteria. The polypeptide is Cytochrome c2 (cycA) (Rhodopseudomonas palustris).